A 328-amino-acid polypeptide reads, in one-letter code: Diaminopimelate epimerase (328 aa).

Residues Asn-14 and Asn-73 each coordinate substrate. The Proton donor role is filled by Cys-82. Residues Gly-83–Asn-84, Asn-170, Asn-206, and Glu-224–Arg-225 each bind substrate. Cys-233 (proton acceptor) is an active-site residue. Gly-234–Thr-235 is a substrate binding site.

The protein belongs to the diaminopimelate epimerase family. As to quaternary structure, homodimer.

Its subcellular location is the cytoplasm. It catalyses the reaction (2S,6S)-2,6-diaminopimelate = meso-2,6-diaminopimelate. Its pathway is amino-acid biosynthesis; L-lysine biosynthesis via DAP pathway; DL-2,6-diaminopimelate from LL-2,6-diaminopimelate: step 1/1. Catalyzes the stereoinversion of LL-2,6-diaminopimelate (L,L-DAP) to meso-diaminopimelate (meso-DAP), a precursor of L-lysine and an essential component of the bacterial peptidoglycan. In Listeria welshimeri serovar 6b (strain ATCC 35897 / DSM 20650 / CCUG 15529 / CIP 8149 / NCTC 11857 / SLCC 5334 / V8), this protein is Diaminopimelate epimerase.